An 89-amino-acid polypeptide reads, in one-letter code: UPF0250 protein Bphy_0213 (89 aa).

This sequence belongs to the UPF0250 family.

The sequence is that of UPF0250 protein Bphy_0213 from Paraburkholderia phymatum (strain DSM 17167 / CIP 108236 / LMG 21445 / STM815) (Burkholderia phymatum).